The following is a 210-amino-acid chain: Putative protein-lysine deacylase ABHD14B (210 aa).

Ala-2 carries the N-acetylalanine modification. Residue Ser-91 is modified to Phosphoserine. Catalysis depends on charge relay system residues Ser-111, Asp-162, and His-188.

It belongs to the AB hydrolase superfamily. ABHD14 family. As to quaternary structure, may interact with TAF1.

The protein resides in the cytoplasm. The protein localises to the nucleus. The catalysed reaction is L-lysyl-[protein] + acetyl-CoA = N(6)-acetyl-L-lysyl-[protein] + CoA + H(+). Functionally, acts as an atypical protein-lysine deacetylase in vitro. Catalyzes the deacetylation of lysine residues using CoA as substrate, generating acetyl-CoA and the free amine of protein-lysine residues. Additional experiments are however required to confirm the protein-lysine deacetylase activity in vivo. Has hydrolase activity towards various surrogate p-nitrophenyl (pNp) substrates, such as pNp-butyrate, pNp-acetate and pNp-octanoate in vitro, with a strong preference for pNp-acetate. May activate transcription. This chain is Putative protein-lysine deacylase ABHD14B, found in Pongo abelii (Sumatran orangutan).